The following is a 393-amino-acid chain: Ornithine decarboxylase 2 (393 aa).

Position 62 is an N6-(pyridoxal phosphate)lysine (lysine 62). Residues serine 194, glycine 231, and 265–268 (EPGR) contribute to the pyridoxal 5'-phosphate site. A substrate-binding site is contributed by 314-315 (YY). Catalysis depends on cysteine 343, which acts as the Proton donor; shared with dimeric partner. Aspartate 344 serves as a coordination point for substrate. Tyrosine 371 is a binding site for pyridoxal 5'-phosphate.

This sequence belongs to the Orn/Lys/Arg decarboxylase class-II family. As to quaternary structure, homodimer. Only the dimer is catalytically active, as the active sites are constructed of residues from both monomers. It depends on pyridoxal 5'-phosphate as a cofactor.

The enzyme catalyses L-ornithine + H(+) = putrescine + CO2. The protein operates within amine and polyamine biosynthesis; putrescine biosynthesis via L-ornithine pathway; putrescine from L-ornithine: step 1/1. Its activity is regulated as follows. Inhibited by antizyme (AZ) in response to polyamine levels. AZ inhibits the assembly of the functional homodimer by binding to ODC monomers and targeting them for ubiquitin-independent proteolytic destruction by the 26S proteasome. Catalyzes the first and rate-limiting step of polyamine biosynthesis that converts ornithine into putrescine, which is the precursor for the polyamines, spermidine and spermine. Polyamines are essential for cell proliferation and are implicated in cellular processes, ranging from DNA replication to apoptosis. This chain is Ornithine decarboxylase 2 (Odc2), found in Drosophila melanogaster (Fruit fly).